A 255-amino-acid polypeptide reads, in one-letter code: Aliphatic sulfonates import ATP-binding protein SsuB (255 aa).

Residues 5 to 231 (IRVNEKAFGK…PRSRTSPVFQ (227 aa)) form the ABC transporter domain. 39–46 (GPSGCGKS) contacts ATP.

The protein belongs to the ABC transporter superfamily. Aliphatic sulfonates importer (TC 3.A.1.17.2) family. As to quaternary structure, the complex is composed of two ATP-binding proteins (SsuB), two transmembrane proteins (SsuC) and a solute-binding protein (SsuA).

Its subcellular location is the cell membrane. The catalysed reaction is ATP + H2O + aliphatic sulfonate-[sulfonate-binding protein]Side 1 = ADP + phosphate + aliphatic sulfonateSide 2 + [sulfonate-binding protein]Side 1.. Part of the ABC transporter complex SsuABC involved in aliphatic sulfonates import. Responsible for energy coupling to the transport system. This Bacillus licheniformis (strain ATCC 14580 / DSM 13 / JCM 2505 / CCUG 7422 / NBRC 12200 / NCIMB 9375 / NCTC 10341 / NRRL NRS-1264 / Gibson 46) protein is Aliphatic sulfonates import ATP-binding protein SsuB.